Reading from the N-terminus, the 440-residue chain is Xaa-Pro dipeptidase (440 aa).

Mn(2+)-binding residues include D244, D255, H335, E380, and E419.

It belongs to the peptidase M24B family. Bacterial-type prolidase subfamily. The cofactor is Mn(2+).

It carries out the reaction Xaa-L-Pro dipeptide + H2O = an L-alpha-amino acid + L-proline. Splits dipeptides with a prolyl residue in the C-terminal position. This Shewanella putrefaciens (strain CN-32 / ATCC BAA-453) protein is Xaa-Pro dipeptidase.